The sequence spans 775 residues: Serine/threonine-protein kinase-like protein CCR1 (775 aa).

The N-terminal stretch at 1-23 (METRCSLLFLSLILLYLPKPGSG) is a signal peptide. Residues 24–439 (FGSSGPIAAS…DKHWHQLQRL (416 aa)) lie on the Extracellular side of the membrane. N-linked (GlcNAc...) asparagine glycans are attached at residues asparagine 57, asparagine 102, asparagine 167, asparagine 213, asparagine 220, asparagine 241, asparagine 261, asparagine 292, asparagine 328, and asparagine 360. One copy of the TNFR-Cys repeat lies at 351 to 406 (PCNEKEFAFNASILNEPDLTSLCVRKELMVCSPCGSDCSHGFFLSSSCTANSDRIC). Disulfide bonds link cysteine 352–cysteine 381, cysteine 384–cysteine 398, and cysteine 388–cysteine 406. N-linked (GlcNAc...) asparagine glycosylation occurs at asparagine 414. Residues 440–460 (VLIIGSCASALLIIIIGCCVV) form a helical membrane-spanning segment. Over 461–775 (PRIVTSPNKE…EHVARDALIF (315 aa)) the chain is Cytoplasmic. In terms of domain architecture, Protein kinase spans 520–770 (FKEFNELGRG…LANWLEHVAR (251 aa)). Residues 526–534 (LGRGSYGFV) and lysine 548 each bind ATP. Catalysis depends on aspartate 645, which acts as the Proton acceptor.

Belongs to the protein kinase superfamily. Ser/Thr protein kinase family. In terms of assembly, homodimer. Expressed in roots, leaves, shoot apical meristems (SAM), and floral buds.

It localises to the membrane. It carries out the reaction L-seryl-[protein] + ATP = O-phospho-L-seryl-[protein] + ADP + H(+). The catalysed reaction is L-threonyl-[protein] + ATP = O-phospho-L-threonyl-[protein] + ADP + H(+). Serine/threonine-protein kinase with low activity. This chain is Serine/threonine-protein kinase-like protein CCR1 (CCR1), found in Arabidopsis thaliana (Mouse-ear cress).